A 554-amino-acid polypeptide reads, in one-letter code: Thermosome subunit alpha (554 aa).

The disordered stretch occupies residues Pro530 to Phe554.

The protein belongs to the TCP-1 chaperonin family. In terms of assembly, forms a Heterooligomeric complex of two stacked eight-membered rings.

Functionally, molecular chaperone; binds unfolded polypeptides in vitro, and has a weak ATPase activity. The chain is Thermosome subunit alpha (thsA) from Aeropyrum pernix (strain ATCC 700893 / DSM 11879 / JCM 9820 / NBRC 100138 / K1).